We begin with the raw amino-acid sequence, 146 residues long: D-aminoacyl-tRNA deacylase (146 aa).

The Gly-cisPro motif, important for rejection of L-amino acids motif lies at 138 to 139; sequence GP.

The protein belongs to the DTD family. As to quaternary structure, homodimer.

It is found in the cytoplasm. It catalyses the reaction glycyl-tRNA(Ala) + H2O = tRNA(Ala) + glycine + H(+). It carries out the reaction a D-aminoacyl-tRNA + H2O = a tRNA + a D-alpha-amino acid + H(+). An aminoacyl-tRNA editing enzyme that deacylates mischarged D-aminoacyl-tRNAs. Also deacylates mischarged glycyl-tRNA(Ala), protecting cells against glycine mischarging by AlaRS. Acts via tRNA-based rather than protein-based catalysis; rejects L-amino acids rather than detecting D-amino acids in the active site. By recycling D-aminoacyl-tRNA to D-amino acids and free tRNA molecules, this enzyme counteracts the toxicity associated with the formation of D-aminoacyl-tRNA entities in vivo and helps enforce protein L-homochirality. The protein is D-aminoacyl-tRNA deacylase of Tolumonas auensis (strain DSM 9187 / NBRC 110442 / TA 4).